Reading from the N-terminus, the 561-residue chain is Zinc finger protein 394 (561 aa).

The segment at 1 to 61 (MNSSLTAQRR…NYPAASPDPE (61 aa)) is disordered. At Ser12 the chain carries Phosphoserine. Residue Lys40 forms a Glycyl lysine isopeptide (Lys-Gly) (interchain with G-Cter in SUMO2) linkage. One can recognise an SCAN box domain in the interval 64 to 146 (RLHFRQLRYQ…AVVRALQRAL (83 aa)). The KRAB domain occupies 155 to 230 (VTFEDTAVSL…LQEAFQGKRP (76 aa)). The interval 182 to 201 (ESAQKDSGSTVPPSLESRVE) is disordered. Residues Lys203 and Lys228 each participate in a glycyl lysine isopeptide (Lys-Gly) (interchain with G-Cter in SUMO2) cross-link. The interval 231-285 (LFSKCGSTHEDRVEKQSGDPLPLKLENSPEAEGLNSISDVNKNGSIEGEDSKNNE) is disordered. Residues 237-247 (STHEDRVEKQS) show a composition bias toward basic and acidic residues. A Glycyl lysine isopeptide (Lys-Gly) (interchain with G-Cter in SUMO2) cross-link involves residue Lys254. Polar residues predominate over residues 265–274 (NSISDVNKNG). Lys282 is covalently cross-linked (Glycyl lysine isopeptide (Lys-Gly) (interchain with G-Cter in SUMO2)). 7 C2H2-type zinc fingers span residues 358-380 (YKCG…QRIH), 386-408 (YGCQ…QRTH), 414-436 (YTCL…QSTH), 442-463 (FKCE…QRLH), 469-491 (YKCE…HRIH), 497-519 (YGCS…QRIH), and 525-547 (YKCL…QRIH). Lys443 is covalently cross-linked (Glycyl lysine isopeptide (Lys-Gly) (interchain with G-Cter in SUMO2)).

Belongs to the krueppel C2H2-type zinc-finger protein family.

Its subcellular location is the nucleus. In terms of biological role, may be involved in transcriptional regulation. The polypeptide is Zinc finger protein 394 (ZNF394) (Homo sapiens (Human)).